The chain runs to 596 residues: MHRYRSHNCAALRKCDVGTQVRLSGWVHRVRDHGGILFVDLRDHFGITQIVVNPDSSAFQIMEKVRSEWVICVDGKVCARSDEVINTTLPTGEIEIFADEIEILSKSDELPLPVFGEPDYPEDIRLKYRFLDLRRVTMHKNIMRRTEIISSIRRHMQDSGFTEFTTPLLTASSPEGARDFLVPSRIHQGKFYALPQAPQQYKQLLMMSGFDRYFQIAPCFRDEDPRADRLPGEFYQLDIEMSFVEQEDVLATMEPIIRSVFEEFSDGKLVTQSFPRISYDEAMRKYGSDKPDLRNPIIIEDVSQHFYDSDFKVFAQILANNENAQVWAIPAKTGGNRAFCDRMNGWAQGEGQPGLGYIFWRKEGENFEGAGPIAKNIGEQRTEAIRTQLGLKEGDACFFVAGDPKKFASFAGASRTRIGEELDLIDSKCFSFAWIVDFPFFEWNEDEKKIDFAHNPFSMPQGGMNAVDSQDPLTIKAFQYDLVCNGYEIASGGIRNHSPEMMLKVFNLAGLSREIVEERFGGLYRAFHYGAPPHGGMAAGVDRIVMLLQGVKNLREISLFPMNQQALDLLMSAPSDVSATQLNDLGIRIFPKVNNA.

Glu-175 contacts L-aspartate. The interval 199–202 (QQYK) is aspartate. L-aspartate contacts are provided by Arg-221 and His-454. 221-223 (RDE) provides a ligand contact to ATP. Glu-488 serves as a coordination point for ATP. Arg-495 lines the L-aspartate pocket. 540–543 (GVDR) is a binding site for ATP.

Belongs to the class-II aminoacyl-tRNA synthetase family. Type 1 subfamily. In terms of assembly, homodimer.

It localises to the cytoplasm. The enzyme catalyses tRNA(Asx) + L-aspartate + ATP = L-aspartyl-tRNA(Asx) + AMP + diphosphate. In terms of biological role, aspartyl-tRNA synthetase with relaxed tRNA specificity since it is able to aspartylate not only its cognate tRNA(Asp) but also tRNA(Asn). Reaction proceeds in two steps: L-aspartate is first activated by ATP to form Asp-AMP and then transferred to the acceptor end of tRNA(Asp/Asn). The sequence is that of Aspartate--tRNA(Asp/Asn) ligase from Bartonella bacilliformis (strain ATCC 35685 / KC583 / Herrer 020/F12,63).